The chain runs to 620 residues: Chaperone protein DnaK (620 aa).

At Thr174 the chain carries Phosphothreonine; by autocatalysis. The interval 590-620 is disordered; the sequence is AAGAGPDMSGAGPQGDTYAGDDVVDGDYREV.

The protein belongs to the heat shock protein 70 family.

In terms of biological role, acts as a chaperone. The chain is Chaperone protein DnaK from Lachnoclostridium phytofermentans (strain ATCC 700394 / DSM 18823 / ISDg) (Clostridium phytofermentans).